Consider the following 61-residue polypeptide: Large ribosomal subunit protein bL32 (61 aa).

Over residues 1–16 the composition is skewed to basic residues; sequence MAVPRRKTSPSRRGMR. Positions 1–61 are disordered; it reads MAVPRRKTSP…RQVLKAKSDS (61 aa). Over residues 27 to 44 the composition is skewed to basic and acidic residues; the sequence is YAEDKDSGELRRPHHLDL.

It belongs to the bacterial ribosomal protein bL32 family.

This chain is Large ribosomal subunit protein bL32, found in Nitrobacter winogradskyi (strain ATCC 25391 / DSM 10237 / CIP 104748 / NCIMB 11846 / Nb-255).